The chain runs to 109 residues: Mitochondrial pyruvate carrier 1 (109 aa).

Alanine 2 is modified (N-acetylalanine). At 2–20 (AGALVRKAADYVRSKDFRD) the chain is on the mitochondrial matrix side. A helical transmembrane segment spans residues 21–41 (YLMSTHFWGPVANWGLPIAAI). The Mitochondrial intermembrane portion of the chain corresponds to 42–52 (NDMKKSPEIIS). Residues 53–71 (GRMTFALCCYSLTFMRFAY) traverse the membrane as a helical segment. An N6-acetyllysine modification is found at lysine 72. The Mitochondrial matrix segment spans residues 72-109 (KVQPRNWLLFACHVTNEVAQLIQGGRLINYEMSKRPSA).

It belongs to the mitochondrial pyruvate carrier (MPC) (TC 2.A.105) family. As to quaternary structure, homodimer. Forms heterodimer with MPC2. The heterodimer is the more stable and dominant form.

It is found in the mitochondrion inner membrane. It catalyses the reaction pyruvate(out) + H(+)(out) = pyruvate(in) + H(+)(in). Mediates the uptake of pyruvate into mitochondria. This is Mitochondrial pyruvate carrier 1 (Mpc1) from Mus musculus (Mouse).